The primary structure comprises 473 residues: uncharacterized protein (473 aa).

A disordered region spans residues 1–86; the sequence is MSSSPTESEI…NTSNYGSSRD (86 aa). The span at 10–19 shows a compositional bias: basic and acidic residues; that stretch reads ILPKESHNSI. Polar residues-rich tracts occupy residues 20–39 and 55–68; these read DEQS…NSFN and EPVQ…PNMA. Ser-64 bears the Phosphoserine mark. Residues 69–83 are compositionally biased toward low complexity; the sequence is SNESGNSENTSNYGS. RRM domains are found at residues 95-165, 188-260, and 305-370; these read LWMG…NHLF, IFVG…PIRV, and VFVG…RIRL. Positions 448-473 are disordered; sequence MHIPENGNSDTMPVPNTQGKHLSAEE. Residues 453-467 show a composition bias toward polar residues; it reads NGNSDTMPVPNTQGK.

This is an uncharacterized protein from Schizosaccharomyces pombe (strain 972 / ATCC 24843) (Fission yeast).